The primary structure comprises 492 residues: uncharacterized protein (492 aa).

Residues 30 to 46 (YVCLSVAVAAVGYANYM) form a helical membrane-spanning segment. The J domain maps to 144 to 210 (NYYDVLNVNE…IRKNIYDNEG (67 aa)).

It localises to the membrane. This is an uncharacterized protein from Plasmodium falciparum (isolate 3D7).